A 407-amino-acid chain; its full sequence is Prolyl hydroxylase EGLN2 (407 aa).

Composition is skewed to low complexity over residues 1–24 (MDSP…SSEP) and 57–75 (ASAG…TASP). 3 disordered regions span residues 1 to 34 (MDSP…RARM), 50 to 89 (CPGV…GELR), and 108 to 157 (AAQG…CSSG). The Bipartite nuclear localization signal motif lies at 89 to 134 (RPLQSEGAAALVTKGCQRLAAQGARPEAPKRKWAEDGGDAPSPSKR). Ser-130 is modified (phosphoserine). The tract at residues 225 to 235 (VSQRAIPPRSI) is beta(2)beta(3) 'finger-like' loop. In terms of domain architecture, Fe2OG dioxygenase spans 278-376 (GRTKAMVACY…RYAITVWYFD (99 aa)). The Fe cation site is built by His-297, Asp-299, and His-358. Arg-367 lines the 2-oxoglutarate pocket.

In terms of assembly, interacts (preferably isoform p40) with SIAH2; the interaction targets both SIAH2 isoforms for proteasomal degradation in vitro. Interacts with LIMD1, WTIP and AJUBA. Fe(2+) serves as cofactor. It depends on L-ascorbate as a cofactor. Post-translationally, ubiquitinated by SIAH1 and/or SIAH2 in response to the unfolded protein response (UPR), leading to its degradation. In terms of tissue distribution, expressed in adult and fetal heart, brain, liver, lung, skeletal muscle, and kidney. Also expressed in testis and placenta. Highest levels in adult brain, placenta, lung, kidney, and testis. Expressed in hormone responsive tissues, including normal and cancerous mammary, ovarian and prostate epithelium.

Its subcellular location is the nucleus. It carries out the reaction L-prolyl-[protein] + 2-oxoglutarate + O2 = trans-4-hydroxy-L-prolyl-[protein] + succinate + CO2. The enzyme catalyses L-prolyl-[hypoxia-inducible factor alpha subunit] + 2-oxoglutarate + O2 = trans-4-hydroxy-L-prolyl-[hypoxia-inducible factor alpha subunit] + succinate + CO2. In terms of biological role, prolyl hydroxylase that mediates hydroxylation of proline residues in target proteins, such as ATF4, IKBKB, CEP192 and HIF1A. Target proteins are preferentially recognized via a LXXLAP motif. Cellular oxygen sensor that catalyzes, under normoxic conditions, the post-translational formation of 4-hydroxyproline in hypoxia-inducible factor (HIF) alpha proteins. Hydroxylates a specific proline found in each of the oxygen-dependent degradation (ODD) domains (N-terminal, NODD, and C-terminal, CODD) of HIF1A. Also hydroxylates HIF2A. Has a preference for the CODD site for both HIF1A and HIF2A. Hydroxylated HIFs are then targeted for proteasomal degradation via the von Hippel-Lindau ubiquitination complex. Under hypoxic conditions, the hydroxylation reaction is attenuated allowing HIFs to escape degradation resulting in their translocation to the nucleus, heterodimerization with HIF1B, and increased expression of hypoxy-inducible genes. EGLN2 is involved in regulating hypoxia tolerance and apoptosis in cardiac and skeletal muscle. Also regulates susceptibility to normoxic oxidative neuronal death. Links oxygen sensing to cell cycle and primary cilia formation by hydroxylating the critical centrosome component CEP192 which promotes its ubiquitination and subsequent proteasomal degradation. Hydroxylates IKBKB, mediating NF-kappa-B activation in hypoxic conditions. Also mediates hydroxylation of ATF4, leading to decreased protein stability of ATF4. The sequence is that of Prolyl hydroxylase EGLN2 from Homo sapiens (Human).